The sequence spans 187 residues: NADH-quinone oxidoreductase subunit B (187 aa).

The [4Fe-4S] cluster site is built by Cys-51, Cys-52, Cys-117, and Cys-149.

It belongs to the complex I 20 kDa subunit family. NDH-1 is composed of 14 different subunits. Subunits NuoB, C, D, E, F, and G constitute the peripheral sector of the complex. The cofactor is [4Fe-4S] cluster.

The protein localises to the cell inner membrane. It catalyses the reaction a quinone + NADH + 5 H(+)(in) = a quinol + NAD(+) + 4 H(+)(out). In terms of biological role, NDH-1 shuttles electrons from NADH, via FMN and iron-sulfur (Fe-S) centers, to quinones in the respiratory chain. The immediate electron acceptor for the enzyme in this species is believed to be ubiquinone. Couples the redox reaction to proton translocation (for every two electrons transferred, four hydrogen ions are translocated across the cytoplasmic membrane), and thus conserves the redox energy in a proton gradient. The sequence is that of NADH-quinone oxidoreductase subunit B from Nitratidesulfovibrio vulgaris (strain DSM 19637 / Miyazaki F) (Desulfovibrio vulgaris).